A 272-amino-acid polypeptide reads, in one-letter code: uncharacterized protein (272 aa).

The protein resides in the periplasm. In terms of biological role, may be involved in ulvan degradation. Ulvan is the main polysaccharide component of the Ulvales (green seaweed) cell wall. It is composed of disaccharide building blocks comprising 3-sulfated rhamnose (Rha3S) linked to D-glucuronic acid (GlcA), L-iduronic acid (IduA), or D-xylose (Xyl). This is an uncharacterized protein from Formosa agariphila (strain DSM 15362 / KCTC 12365 / LMG 23005 / KMM 3901 / M-2Alg 35-1).